The sequence spans 802 residues: MQSIFNNKYQFKNIETKYNTLWDTTKLYKWKNSGTNQFVIDTPPPTISGQLHIGHVFSYCHTDFIARYQRMLGKDVFYPIGFDDNGLPTERLVEKTKKIRATDISRKEFKTICTQVSHEFRIQFKQLFQSIGISYDWDLEYHTISKDIQKISQTSFINLYNKGKLYRKLQPIFWDCIDKTAIARAEVEENELSSFMNTIAFSTEAGKAINIATTRPELMPACVAVFFNPSDIRYQDLLGQNAIVPIFGNKVKILSDDQVKIDKGTGLVMCCTFGDEMDVYWWNKHNLDTKIIISKSGTIDHLNTLQGQDVCKQLHGLSITEARALIIEILERNNLLIQKQEITHNVKCAERSGAPIEILLSHQWFIKVVDIKHELLKQVQKINWHPQSMRKQIEIWIEGLNWDWCISRQRYFGVPFPVWYSKDGKIILPDINKLPIDPTNDLPEGYQDTEIEVETDVMDTWATSSLSTQFHNISATPADLRAQSHEIIRSWAFYTILQAYYHNNDIPWKNIMISGWCLAEDKTKMSKSKGNVLTPNKLLDEYGADVVRYWTANSKLGADTTFSNEILKLGKRFTTKLWNASKFVSMFIDQYSEPDLQYITETMDKWILSKLYKVIVKATESFNSFEYCIALDCIESFFWKDFCDNYLELSKKRAYGELISKQEHLSAVNTLSFVLRELLKMLAPFMPYVTEEIYRTLYSSNNSIHSHNTWPAADVNLYNESDELLGETFIEILNQVRKVKASAQLSVKYKINKLIINKHFPVSLENDLKAVCNADCIVYDNRQNDNKEQLLVSVEFENVQIT.

The 'HIGH' region signature appears at 45 to 55 (PTISGQLHIGH). Positions 524–528 (KMSKS) match the 'KMSKS' region motif. Lys-527 provides a ligand contact to ATP.

Belongs to the class-I aminoacyl-tRNA synthetase family. ValS type 2 subfamily. In terms of assembly, monomer.

The protein localises to the cytoplasm. The enzyme catalyses tRNA(Val) + L-valine + ATP = L-valyl-tRNA(Val) + AMP + diphosphate. In terms of biological role, catalyzes the attachment of valine to tRNA(Val). As ValRS can inadvertently accommodate and process structurally similar amino acids such as threonine, to avoid such errors, it has a 'posttransfer' editing activity that hydrolyzes mischarged Thr-tRNA(Val) in a tRNA-dependent manner. The polypeptide is Valine--tRNA ligase (Ehrlichia canis (strain Jake)).